The chain runs to 160 residues: uncharacterized protein (160 aa).

Transmembrane regions (helical) follow at residues 7-27, 48-68, 95-115, and 121-141; these read IFLKIALVLIGIPILALCIFL, LVFIYLYVTAIPFYFALYQAF, AVTISIFYAAGMPVFYLMAEI, and IIVIGLVIIFASMVIAVFAAV.

The protein localises to the cell membrane. This is an uncharacterized protein from Bacillus subtilis (strain 168).